Here is a 118-residue protein sequence, read N- to C-terminus: Large ribosomal subunit protein uL22 (118 aa).

It belongs to the universal ribosomal protein uL22 family. As to quaternary structure, part of the 50S ribosomal subunit.

Its function is as follows. This protein binds specifically to 23S rRNA; its binding is stimulated by other ribosomal proteins, e.g. L4, L17, and L20. It is important during the early stages of 50S assembly. It makes multiple contacts with different domains of the 23S rRNA in the assembled 50S subunit and ribosome. In terms of biological role, the globular domain of the protein is located near the polypeptide exit tunnel on the outside of the subunit, while an extended beta-hairpin is found that lines the wall of the exit tunnel in the center of the 70S ribosome. In Synechococcus sp. (strain RCC307), this protein is Large ribosomal subunit protein uL22.